Here is a 60-residue protein sequence, read N- to C-terminus: uncharacterized protein (60 aa).

This is an uncharacterized protein from Dictyostelium discoideum (Social amoeba).